The primary structure comprises 346 residues: Small ribosomal subunit biogenesis GTPase RsgA 2 (346 aa).

Residues 93–248 (EEQLIAANFD…VIDTPGMREF (156 aa)) enclose the CP-type G domain. GTP-binding positions include 138–141 (TKAD) and 190–198 (GSSGVGKSS). Residues C271, C276, H278, and C284 each contribute to the Zn(2+) site.

Belongs to the TRAFAC class YlqF/YawG GTPase family. RsgA subfamily. As to quaternary structure, monomer. Associates with 30S ribosomal subunit, binds 16S rRNA. Zn(2+) serves as cofactor.

It is found in the cytoplasm. One of several proteins that assist in the late maturation steps of the functional core of the 30S ribosomal subunit. Helps release RbfA from mature subunits. May play a role in the assembly of ribosomal proteins into the subunit. Circularly permuted GTPase that catalyzes slow GTP hydrolysis, GTPase activity is stimulated by the 30S ribosomal subunit. The chain is Small ribosomal subunit biogenesis GTPase RsgA 2 from Listeria monocytogenes serotype 4b (strain F2365).